We begin with the raw amino-acid sequence, 494 residues long: Integrin beta-like protein 1 (494 aa).

The signal sequence occupies residues 1 to 23 (MRPPGFRNFLLLASSLLFAGLSA). Intrachain disulfides connect C40-C71, C51-C69, C63-C74, C76-C89, C91-C112, C96-C110, C104-C115, C117-C126, C132-C159, C143-C157, C151-C162, C164-C178, C180-C202, C185-C200, C194-C205, C207-C216, C220-C247, C231-C245, C239-C250, C252-C269, C271-C296, C276-C294, C288-C299, C301-C310, C316-C343, C327-C341, C335-C346, C348-C361, C363-C384, C368-C382, C376-C387, C389-C398, C404-C431, C415-C429, C423-C434, C436-C448, C450-C471, C455-C469, C463-C474, and C476-C485. I-EGF domains follow at residues 40-90 (CRLS…PLCE), 91-127 (CHEWVCETYDGSTCAGHGKCDCGKCKCDQGWYGDACQ), 132-179 (CDLT…KFCE), 180-217 (CDDRECIDDETEEICGGHGKCYCGNCYCKAGWHGDKCE), 220-270 (CDIT…DTCE), 271-311 (CDER…KKCE), 316-362 (CTLS…KTCE), 363-399 (CDDRRCEDLDGVVCGGHGTCSCGRCVCERGWFGKLCQ), 404-449 (CNMT…EFCD), and 450-486 (CDDRDCDKHDGLICTGNGICSCGNCECWDGWNGNACE). The stretch at 51-95 (CRAPGQPPGAALCHGRGRCDCGVCICHVTEPGMFFGPLCECHEWV) is one I repeat. The interval 51-494 (CRAPGQPPGA…CEIWLGSEYP (444 aa)) is cysteine-rich tandem repeats. Residues 96–142 (CETYDGSTCAGHGKCDCGKCKCDQGWYGDACQYPTNCDLTKKKSNQM) form an II repeat. The III repeat unit spans residues 143-184 (CKNSQDIICSNAGTCHCGRCKCDNSDGSGLVYGKFCECDDRE). The IV repeat unit spans residues 185-230 (CIDDETEEICGGHGKCYCGNCYCKAGWHGDKCEFQCDITPWESKRR). One copy of the V repeat lies at 231 to 275 (CTSPDGKICSNRGTCVCGECTCHDVDPTGDWGDIHGDTCECDERD). The VI repeat unit spans residues 276 to 326 (CRAVYDRYSDDFCSGHGQCNCGRCDCKAGWYGKKCEHPQSCTLSAEESIRK). The VII repeat unit spans residues 327–367 (CQGSSDLPCSGRGKCECGKCTCYPPGDRRVYGKTCECDDRR). The stretch at 368 to 414 (CEDLDGVVCGGHGTCSCGRCVCERGWFGKLCQHPRKCNMTEEQSKNL) is one VIII repeat. An N-linked (GlcNAc...) asparagine glycan is attached at N405. One copy of the IX repeat lies at 415 to 454 (CESADGILCSGKGSCHCGKCICSAEEWYISGEFCDCDDRD). A X repeat occupies 455 to 494 (CDKHDGLICTGNGICSCGNCECWDGWNGNACEIWLGSEYP).

Widely expressed in many tissues, but readily detectable only in aorta.

The protein resides in the secreted. This is Integrin beta-like protein 1 (ITGBL1) from Homo sapiens (Human).